Reading from the N-terminus, the 79-residue chain is Acyl carrier protein (79 aa).

One can recognise a Carrier domain in the interval 2-77; sequence ADHASKIKDI…DAVAYLEAKV (76 aa). Ser37 bears the O-(pantetheine 4'-phosphoryl)serine mark.

Belongs to the acyl carrier protein (ACP) family. In terms of processing, 4'-phosphopantetheine is transferred from CoA to a specific serine of apo-ACP by AcpS. This modification is essential for activity because fatty acids are bound in thioester linkage to the sulfhydryl of the prosthetic group.

It is found in the cytoplasm. The protein operates within lipid metabolism; fatty acid biosynthesis. In terms of biological role, carrier of the growing fatty acid chain in fatty acid biosynthesis. The sequence is that of Acyl carrier protein from Gemmatimonas aurantiaca (strain DSM 14586 / JCM 11422 / NBRC 100505 / T-27).